A 1015-amino-acid polypeptide reads, in one-letter code: SKI family transcriptional corepressor 2 (1015 aa).

2 disordered regions span residues 280–316 and 518–934; these read HLLGAPPPPPPPPPPLAELAGAPHAHHKRPRFDDDDD and GAAG…KKDV. Residues 284–295 show a composition bias toward pro residues; it reads APPPPPPPPPPL. The segment covering 575–600 has biased composition (low complexity); sequence PPADSVAAAGAGAAAAGSGPAGSRVP. The span at 628–637 shows a compositional bias: basic and acidic residues; the sequence is GGKDDAESLA. Over residues 653 to 669 the composition is skewed to basic residues; the sequence is HPHHHHHPHHHHHHHHP. 2 stretches are compositionally biased toward pro residues: residues 670–684 and 694–708; these read PQPPSPLLLLPPQPD and APPPPPPPPPPPPLA. Acidic residues-rich tracts occupy residues 730-745 and 754-774; these read DSSEDEDDEEEEQEVD and GEEEEEGRDPDDDEEEDEETE. Over residues 793–803 the composition is skewed to basic and acidic residues; sequence PSEKGSSRDRA. Residues 832–842 are compositionally biased toward pro residues; the sequence is DLPPPPPPPLA. Composition is skewed to basic and acidic residues over residues 861–877, 885–899, and 912–922; these read PSLEEQPSYKDSQKTKE, TKDDNSFSDKNKEHS, and FWRERSGEHTQ.

It belongs to the SKI family. Interacts with SMAD2 and SMAD3. As to expression, expressed in cerebellum, spinal cord and testis. Isoform 2 is present in cerebellum (at protein level).

The protein resides in the nucleus. Its subcellular location is the cytoplasm. Functionally, exhibits transcriptional repressor activity. Acts as a TGF-beta antagonist in the nervous system. The chain is SKI family transcriptional corepressor 2 from Homo sapiens (Human).